The following is a 716-amino-acid chain: Dynein axonemal intermediate chain 7 (716 aa).

This sequence belongs to the DNAI7 family. In terms of assembly, part of the multisubunit axonemal dynein complex formed at least of two heavy chains and a number of intermediate and light chains. Interacts with tubulin. Associates with microtubule. Post-translationally, ubiquitinated. Ubiquitination leads to its degradation through the 26S proteasome. Ubiquitin-proteasome-mediated DNAI7 degradation occurs in mitosis.

It is found in the cell projection. Its subcellular location is the cilium. The protein resides in the cytoplasm. Via its association with the multisubunit axonemal dynein complex, is potentially involved in the regulation of cilia function. May also act as a cell cycle regulator. The polypeptide is Dynein axonemal intermediate chain 7 (Homo sapiens (Human)).